The sequence spans 207 residues: Protein MK0488 (207 aa).

The region spanning 8 to 200 (EEGEFLVRLA…EEEPEGPVRE (193 aa)) is the AMMECR1 domain.

The sequence is that of Protein MK0488 from Methanopyrus kandleri (strain AV19 / DSM 6324 / JCM 9639 / NBRC 100938).